The sequence spans 309 residues: ADP-L-glycero-D-manno-heptose-6-epimerase (309 aa).

Residues 10-11, 31-32, Lys38, Lys53, 75-79, and Asn92 contribute to the NADP(+) site; these read LI, DN, and QGACS. Tyr139 functions as the Proton acceptor in the catalytic mechanism. Residue Lys143 participates in NADP(+) binding. Asn168 provides a ligand contact to substrate. NADP(+) contacts are provided by Val169 and Lys177. Lys177 functions as the Proton acceptor in the catalytic mechanism. Residues Ser179, His186, 200–203, Arg208, and Tyr271 contribute to the substrate site; that span reads FAGS.

This sequence belongs to the NAD(P)-dependent epimerase/dehydratase family. HldD subfamily. In terms of assembly, homopentamer. NADP(+) is required as a cofactor.

It carries out the reaction ADP-D-glycero-beta-D-manno-heptose = ADP-L-glycero-beta-D-manno-heptose. It participates in nucleotide-sugar biosynthesis; ADP-L-glycero-beta-D-manno-heptose biosynthesis; ADP-L-glycero-beta-D-manno-heptose from D-glycero-beta-D-manno-heptose 7-phosphate: step 4/4. Its function is as follows. Catalyzes the interconversion between ADP-D-glycero-beta-D-manno-heptose and ADP-L-glycero-beta-D-manno-heptose via an epimerization at carbon 6 of the heptose. The protein is ADP-L-glycero-D-manno-heptose-6-epimerase of Histophilus somni (strain 2336) (Haemophilus somnus).